The chain runs to 178 residues: Small ribosomal subunit protein uS4 (178 aa).

The 63-residue stretch at 104-166 folds into the S4 RNA-binding domain; the sequence is RRLQTIVFRK…SNSPMASENH (63 aa). Positions 158-178 are disordered; that stretch reads NSPMASENHPERTAATSEENQ.

This sequence belongs to the universal ribosomal protein uS4 family. In terms of assembly, part of the 30S ribosomal subunit. Contacts protein S5. The interaction surface between S4 and S5 is involved in control of translational fidelity.

In terms of biological role, one of the primary rRNA binding proteins, it binds directly to 16S rRNA where it nucleates assembly of the body of the 30S subunit. Functionally, with S5 and S12 plays an important role in translational accuracy. This is Small ribosomal subunit protein uS4 from Methanococcus maripaludis (strain DSM 14266 / JCM 13030 / NBRC 101832 / S2 / LL).